A 350-amino-acid chain; its full sequence is Serine/arginine-rich splicing factor RS40 (350 aa).

RRM domains are found at residues 2 to 74 and 97 to 168; these read KPVF…WTKS and KTLF…YAVK. Basic and acidic residues-rich tracts occupy residues 73-82 and 167-187; these read KSERGGDKRS and VKDD…DRSP. Disordered regions lie at residues 73 to 94 and 167 to 350; these read KSER…SSMR and VKDD…PADE. Residues Ser193, Ser195, and Ser211 each carry the phosphoserine modification. 2 stretches are compositionally biased toward basic and acidic residues: residues 216 to 227 and 240 to 255; these read YRKERTSPDYGR and GSPE…DSPR. Phosphoserine occurs at positions 241, 262, 278, 298, 308, 335, and 340. Basic and acidic residues predominate over residues 272–289; the sequence is NKRERMSPNHSPFKKESP. Over residues 299–308 the composition is skewed to basic and acidic residues; sequence PIERRERSRS.

It belongs to the splicing factor SR family. RS subfamily. As to quaternary structure, component of the spliceosome. Interacts with SNRNP35. Interacts with CYP59. Interacts with RCF3 and CPL1. Interacts with DRB1/HYL1 and SE. In terms of tissue distribution, highly expressed in roots and flowers. A presumably longer alternatively spliced form is found in leaves, stems and flowers.

The protein localises to the nucleus. It is found in the nucleus speckle. Functionally, required for constitutive and alternative pre-mRNA splicing. Involved in primary miRNA processing and pri-miRNA biogenesis. Binds both intronless and intron-containing pri-miRNAs. This chain is Serine/arginine-rich splicing factor RS40 (RS40), found in Arabidopsis thaliana (Mouse-ear cress).